Consider the following 329-residue polypeptide: MSQLPGLSRETRESIAMYHLRVPQTEEELERYYQFRWEMLRKPLHQPKGSERDAWDAMAHHQMVVDEQGNLVAVGRLYINADNEASIRFMAVHPDVQDKGLGTLMAMTLESVARQEGVKRVTCSAREDAVEFFAKLGFVNQGEITTPTTTPIRHFLMIKPVATLDDILHRGDWCAQLQQAWYEHIPLSEKMGVRIQQYTGQKFITTMPETGNQNPHHTLFAGSLFSLATLTGWGLIWLMLRERHLGGTIILADAHIRYSKPISGKPHAVADLGALSGDLDRLARGRKARVQMQVEIFGDETPGAVFEGTYIVLPAKPFGPYEEGGNEEE.

The N-acetyltransferase domain occupies 18–162 (YHLRVPQTEE…RHFLMIKPVA (145 aa)).

It belongs to the acetyltransferase family. FabY subfamily.

The protein operates within lipid metabolism; fatty acid biosynthesis. Supports initiation of fatty acid biosynthesis in the absence of FabH. This is Probable acyltransferase FabY from Escherichia coli O157:H7.